Here is a 1006-residue protein sequence, read N- to C-terminus: Pentatricopeptide repeat-containing protein At1g30610, chloroplastic (1006 aa).

A chloroplast-targeting transit peptide spans 1–40; the sequence is MAVTISTNAFVNASLLDESRNSFWRPLFHQPYYNCRRVVR. Disordered stretches follow at residues 180–219 and 248–292; these read LSKS…ERGS and SSVA…IARG. Positions 194-219 are enriched in basic and acidic residues; the sequence is ESFRKRYSKQEYHRSSDTSRGIERGS. The span at 254–263 shows a compositional bias: polar residues; the sequence is WSNSGESSVT. A compositionally biased stretch (basic and acidic residues) spans 265–284; that stretch reads PKDESFRRRYSKQEHHRSSD. 10 PPR repeats span residues 468 to 502, 506 to 536, 542 to 572, 592 to 626, 627 to 657, 661 to 695, 759 to 789, 793 to 827, 840 to 874, and 875 to 909; these read TDYT…DRYK, IRII…MLLQ, DMVA…MRSP, DVVV…GQKP, SPVT…MQKS, NALA…GIVG, LVVT…MKKV, NLVT…GNHI, DTYT…GYHF, and NAKR…NRIP.

The protein belongs to the PPR family. P subfamily.

The protein resides in the plastid. It localises to the chloroplast. Functionally, may play a role in embryogenesis. The protein is Pentatricopeptide repeat-containing protein At1g30610, chloroplastic (EMB2279) of Arabidopsis thaliana (Mouse-ear cress).